Here is a 218-residue protein sequence, read N- to C-terminus: Peptide methionine sulfoxide reductase MsrA (218 aa).

The active site involves Cys-57.

Belongs to the MsrA Met sulfoxide reductase family.

It carries out the reaction L-methionyl-[protein] + [thioredoxin]-disulfide + H2O = L-methionyl-(S)-S-oxide-[protein] + [thioredoxin]-dithiol. The catalysed reaction is [thioredoxin]-disulfide + L-methionine + H2O = L-methionine (S)-S-oxide + [thioredoxin]-dithiol. Its function is as follows. Has an important function as a repair enzyme for proteins that have been inactivated by oxidation. Catalyzes the reversible oxidation-reduction of methionine sulfoxide in proteins to methionine. The polypeptide is Peptide methionine sulfoxide reductase MsrA (Brucella suis biovar 1 (strain 1330)).